Reading from the N-terminus, the 202-residue chain is 3-isopropylmalate dehydratase small subunit (202 aa).

This sequence belongs to the LeuD family. LeuD type 1 subfamily. Heterodimer of LeuC and LeuD.

It carries out the reaction (2R,3S)-3-isopropylmalate = (2S)-2-isopropylmalate. Its pathway is amino-acid biosynthesis; L-leucine biosynthesis; L-leucine from 3-methyl-2-oxobutanoate: step 2/4. Catalyzes the isomerization between 2-isopropylmalate and 3-isopropylmalate, via the formation of 2-isopropylmaleate. The chain is 3-isopropylmalate dehydratase small subunit from Rhizobium etli (strain ATCC 51251 / DSM 11541 / JCM 21823 / NBRC 15573 / CFN 42).